Consider the following 1958-residue polypeptide: Sodium channel protein type 10 subunit alpha (1958 aa).

The Cytoplasmic portion of the chain corresponds to M1 to K125. Residues Q27 to Q54 form a disordered region. The span at R32–R42 shows a compositional bias: basic residues. The span at G43 to Q54 shows a compositional bias: basic and acidic residues. The I repeat unit spans residues F116 to Q404. Residues V126–R149 form a helical membrane-spanning segment. Residues T150 to E154 lie on the Extracellular side of the membrane. The chain crosses the membrane as a helical span at residues K155–A174. At R175–D187 the chain is on the cytoplasmic side. Residues P188–I206 traverse the membrane as a helical segment. The Extracellular segment spans residues D207–S212. A helical; Voltage-sensor membrane pass occupies residues G213–L232. The Cytoplasmic segment spans residues K233–D248. Residues V249–L272 form a helical membrane-spanning segment. Residues K273–S340 lie on the Extracellular side of the membrane. C276 and C318 are joined by a disulfide. N279, N288, N311, and N334 each carry an N-linked (GlcNAc...) asparagine glycan. The segment at residues F341–L365 is an intramembrane region (pore-forming). Residues R366–Y372 lie on the Extracellular side of the membrane. The chain crosses the membrane as a helical span at residues M373–A398. Over Y399–F658 the chain is Cytoplasmic. Residues S440, S443, S466, and S478 each carry the phosphoserine modification. Disordered stretches follow at residues H444–Q483 and G539–G583. Pro residues predominate over residues P549–G560. Phosphoserine occurs at positions 611 and 614. Residues C646 to Q910 form an II repeat. The chain crosses the membrane as a helical span at residues E659–M683. Over E684–A694 the chain is Extracellular. The chain crosses the membrane as a helical span at residues M695 to F718. The Cytoplasmic segment spans residues D719–K726. A helical transmembrane segment spans residues K727–S746. The Extracellular segment spans residues K747–S752. A helical; Voltage-sensor membrane pass occupies residues V753–L772. The Cytoplasmic segment spans residues N773 to N788. A helical transmembrane segment spans residues L789–S809. The Extracellular portion of the chain corresponds to E810–D833. An intramembrane region (pore-forming) is located at residues F834 to W854. At V855–Y863 the chain is on the extracellular side. The cysteines at positions 856 and 865 are disulfide-linked. The helical transmembrane segment at I864–L889 threads the bilayer. Residues N890–R1148 lie on the Cytoplasmic side of the membrane. The tract at residues D1006–D1094 is disordered. The segment covering A1017–Q1038 has biased composition (polar residues). One copy of the III repeat lies at Q1141–L1450. The helical transmembrane segment at I1149 to F1172 threads the bilayer. Over E1173–S1185 the chain is Extracellular. A helical membrane pass occupies residues V1186–F1211. Residues K1212 to N1217 are Cytoplasmic-facing. The helical transmembrane segment at A1218 to L1239 threads the bilayer. At E1240–D1243 the chain is on the extracellular side. The helical; Voltage-sensor transmembrane segment at V1244–F1265 threads the bilayer. The Cytoplasmic portion of the chain corresponds to E1266–N1284. A helical transmembrane segment spans residues V1285 to V1312. The Extracellular segment spans residues D1313–V1354. N-linked (GlcNAc...) asparagine glycosylation is found at N1323, N1329, and N1337. The pore-forming intramembrane region spans A1355–A1376. Residues A1377–S1392 are Extracellular-facing. A helical transmembrane segment spans residues L1393–I1419. Topologically, residues D1420 to D1472 are cytoplasmic. S1452 is subject to Phosphoserine; by PKC. The stretch at I1459–Q1758 is one IV repeat. Residues I1473–V1496 form a helical membrane-spanning segment. The Extracellular segment spans residues E1497–K1507. N1500 is a glycosylation site (N-linked (GlcNAc...) asparagine). Residues V1508–L1531 traverse the membrane as a helical segment. Residues R1532 to T1537 lie on the Cytoplasmic side of the membrane. A helical membrane pass occupies residues N1538 to L1561. The Extracellular segment spans residues S1562–L1573. The helical; Voltage-sensor transmembrane segment at R1574 to R1595 threads the bilayer. The Cytoplasmic segment spans residues T1596–N1610. A helical transmembrane segment spans residues I1611–V1633. Residues I1634–T1647 lie on the Extracellular side of the membrane. The segment at residues F1648–P1670 is an intramembrane region (pore-forming). Topologically, residues I1671 to V1698 are extracellular. N1687 is a glycosylation site (N-linked (GlcNAc...) asparagine). The helical transmembrane segment at G1699–L1723 threads the bilayer. Residues E1724 to Q1958 lie on the Cytoplasmic side of the membrane. The IQ domain occupies E1852–P1881. The disordered stretch occupies residues N1901 to Q1958. Polar residues predominate over residues A1933–Q1942. The span at V1947 to Q1958 shows a compositional bias: basic and acidic residues.

The protein belongs to the sodium channel (TC 1.A.1.10) family. Nav1.8/SCN10A subfamily. As to quaternary structure, the channel consists of an ion conducting pore forming alpha-subunit regulated by one or more associated auxiliary subunits SCN1B, SCN2B and SCN3B; electrophysiological properties may vary depending on the type of the associated beta subunits. Found in a number of complexes with PRX, DYNLT1 and PDZD2. Interacts with proteins such as FSTL1, PRX, DYNLT1, PDZD2, S100A10 and many others. Interacts with NEDD4 and NEDD4L. In terms of processing, ubiquitinated by NEDD4L; which promotes its endocytosis. Phosphorylation at Ser-1452 by PKC in a highly conserved cytoplasmic loop slows inactivation of the sodium channel and reduces peak sodium currents. Post-translationally, lacks the cysteine which covalently binds the conotoxin GVIIJ. This cysteine (position 815) is speculated in other sodium channel subunits alpha to be implied in covalent binding with the sodium channel subunit beta-2 or beta-4. As to expression, expressed in dorsal root ganglion and trigeminal ganglion.

The protein resides in the cell membrane. It catalyses the reaction Na(+)(in) = Na(+)(out). Its function is as follows. Tetrodotoxin-resistant channel that mediates the voltage-dependent sodium ion permeability of excitable membranes. Assuming opened or closed conformations in response to the voltage difference across the membrane, the protein forms a sodium-selective channel through which sodium ions may pass in accordance with their electrochemical gradient. Plays a role in neuropathic pain mechanisms. The polypeptide is Sodium channel protein type 10 subunit alpha (Mus musculus (Mouse)).